The chain runs to 187 residues: Threonylcarbamoyl-AMP synthase (187 aa).

Positions 3–187 (NSELLKIIWA…LLNGYLYRKR (185 aa)) constitute a YrdC-like domain.

Belongs to the SUA5 family. TsaC subfamily.

Its subcellular location is the cytoplasm. The catalysed reaction is L-threonine + hydrogencarbonate + ATP = L-threonylcarbamoyladenylate + diphosphate + H2O. In terms of biological role, required for the formation of a threonylcarbamoyl group on adenosine at position 37 (t(6)A37) in tRNAs that read codons beginning with adenine. Catalyzes the conversion of L-threonine, HCO(3)(-)/CO(2) and ATP to give threonylcarbamoyl-AMP (TC-AMP) as the acyladenylate intermediate, with the release of diphosphate. This chain is Threonylcarbamoyl-AMP synthase, found in Riesia pediculicola (strain USDA).